The following is a 255-amino-acid chain: tRNA (guanine-N(1)-)-methyltransferase (255 aa).

S-adenosyl-L-methionine contacts are provided by residues Gly113 and 133–138 (IGDYVL).

The protein belongs to the RNA methyltransferase TrmD family. In terms of assembly, homodimer.

The protein resides in the cytoplasm. It carries out the reaction guanosine(37) in tRNA + S-adenosyl-L-methionine = N(1)-methylguanosine(37) in tRNA + S-adenosyl-L-homocysteine + H(+). In terms of biological role, specifically methylates guanosine-37 in various tRNAs. This chain is tRNA (guanine-N(1)-)-methyltransferase, found in Salmonella choleraesuis (strain SC-B67).